A 473-amino-acid polypeptide reads, in one-letter code: Probable aspartokinase (473 aa).

ACT domains follow at residues 323 to 392 (IFGA…FLNN) and 409 to 473 (VVGA…KTNS).

It belongs to the aspartokinase family.

The catalysed reaction is L-aspartate + ATP = 4-phospho-L-aspartate + ADP. The protein operates within amino-acid biosynthesis; L-lysine biosynthesis via DAP pathway; (S)-tetrahydrodipicolinate from L-aspartate: step 1/4. Its pathway is amino-acid biosynthesis; L-methionine biosynthesis via de novo pathway; L-homoserine from L-aspartate: step 1/3. It participates in amino-acid biosynthesis; L-threonine biosynthesis; L-threonine from L-aspartate: step 1/5. This chain is Probable aspartokinase, found in Methanocaldococcus jannaschii (strain ATCC 43067 / DSM 2661 / JAL-1 / JCM 10045 / NBRC 100440) (Methanococcus jannaschii).